A 236-amino-acid chain; its full sequence is Phosphoribosylaminoimidazole-succinocarboxamide synthase (236 aa).

The protein belongs to the SAICAR synthetase family.

It catalyses the reaction 5-amino-1-(5-phospho-D-ribosyl)imidazole-4-carboxylate + L-aspartate + ATP = (2S)-2-[5-amino-1-(5-phospho-beta-D-ribosyl)imidazole-4-carboxamido]succinate + ADP + phosphate + 2 H(+). It participates in purine metabolism; IMP biosynthesis via de novo pathway; 5-amino-1-(5-phospho-D-ribosyl)imidazole-4-carboxamide from 5-amino-1-(5-phospho-D-ribosyl)imidazole-4-carboxylate: step 1/2. This is Phosphoribosylaminoimidazole-succinocarboxamide synthase from Campylobacter jejuni subsp. jejuni serotype O:6 (strain 81116 / NCTC 11828).